The following is a 238-amino-acid chain: Ribitol-5-phosphate cytidylyltransferase (238 aa).

CTP-binding positions include 7-10 and 80-86; these read FAGG and GETGQES.

The protein belongs to the IspD/TarI cytidylyltransferase family. TarI subfamily.

It catalyses the reaction D-ribitol 5-phosphate + CTP + H(+) = CDP-L-ribitol + diphosphate. In terms of biological role, catalyzes the transfer of the cytidylyl group of CTP to D-ribitol 5-phosphate. This chain is Ribitol-5-phosphate cytidylyltransferase, found in Vibrio parahaemolyticus serotype O3:K6 (strain RIMD 2210633).